A 546-amino-acid chain; its full sequence is 2-isopropylmalate synthase (546 aa).

A Pyruvate carboxyltransferase domain is found at 8 to 271; the sequence is ILIFDTTLRD…NSFFKRNPDS (264 aa). Mn(2+) contacts are provided by Asp-17, His-208, His-210, and Asn-244. The interval 408–546 is regulatory domain; it reads QLSLVQVSCG…NNTYISNPAN (139 aa).

The protein belongs to the alpha-IPM synthase/homocitrate synthase family. LeuA type 1 subfamily. In terms of assembly, homodimer. Mn(2+) is required as a cofactor.

The protein localises to the cytoplasm. It carries out the reaction 3-methyl-2-oxobutanoate + acetyl-CoA + H2O = (2S)-2-isopropylmalate + CoA + H(+). It functions in the pathway amino-acid biosynthesis; L-leucine biosynthesis; L-leucine from 3-methyl-2-oxobutanoate: step 1/4. Catalyzes the condensation of the acetyl group of acetyl-CoA with 3-methyl-2-oxobutanoate (2-ketoisovalerate) to form 3-carboxy-3-hydroxy-4-methylpentanoate (2-isopropylmalate). The chain is 2-isopropylmalate synthase from Prochlorococcus marinus (strain MIT 9301).